The sequence spans 379 residues: Sulfate adenylyltransferase (379 aa).

Belongs to the sulfate adenylyltransferase family.

It carries out the reaction sulfate + ATP + H(+) = adenosine 5'-phosphosulfate + diphosphate. Its pathway is sulfur metabolism; hydrogen sulfide biosynthesis; sulfite from sulfate: step 1/3. The sequence is that of Sulfate adenylyltransferase from Thermococcus onnurineus (strain NA1).